Reading from the N-terminus, the 533-residue chain is Calcium-dependent protein kinase 12 (533 aa).

The segment at 1–77 is disordered; sequence MGNCFTKTYE…RASGGGGEMG (77 aa). A lipid anchor (N-myristoyl glycine) is attached at Gly2. The segment covering 26-38 has biased composition (basic and acidic residues); that stretch reads ERSKARGGDEPGT. Over residues 57–69 the composition is skewed to low complexity; sequence GSSSAAGALSRRA. One can recognise a Protein kinase domain in the interval 91–349; it reads YQLDRKLGSG…ASQALEHRWL (259 aa). ATP contacts are provided by residues 97-105 and Lys120; that span reads LGSGQFGTT. The Proton acceptor role is filled by Asp215. Residues 354–384 are autoinhibitory domain; it reads ASDRPIDSAVLSRMKQFKAMNKLKQLALKVI. 4 EF-hand domains span residues 391–426, 427–462, 463–498, and 499–533; these read EEIKGLKQMFNNMDTDRSGTITVEELKVGLTKLGSR, ISEAEVQKLMEAVDVDKSGSIDYSEFLTAMINKHKL, EKEEDLLRAFQHFDKDNSGYITRDELEQAMAEYGMG, and DEANIKQVLDEVDKDKDGRIDYEEFVEMMRKGIQT. The Ca(2+) site is built by Asp404, Asp406, Ser408, Thr410, Glu415, Asp440, Asp442, Ser444, Ser446, Glu451, Asp476, Asp478, Ser480, Tyr482, Glu487, Asp511, Asp513, Asp515, Arg517, and Glu522.

The protein belongs to the protein kinase superfamily. Ser/Thr protein kinase family. CDPK subfamily. As to expression, expressed in roots, leaf blades and developing seeds. Expressed in vascular tissues of roots and leaf blades. Expressed in the phloem tissue of the large vascular bundle in leaf blades.

The protein resides in the membrane. It carries out the reaction L-seryl-[protein] + ATP = O-phospho-L-seryl-[protein] + ADP + H(+). It catalyses the reaction L-threonyl-[protein] + ATP = O-phospho-L-threonyl-[protein] + ADP + H(+). Its activity is regulated as follows. Activated by calcium. Autophosphorylation may play an important role in the regulation of the kinase activity. May play a role in signal transduction pathways that involve calcium as a second messenger. Functions in signal transduction pathways that positively regulate responses to low-nitrogen. Functions in multiple signaling pathways, positively regulating salt tolerance and negatively modulating rice blast fungus resistance. May promote tolerance to salt stress by negatively regulating NADPH oxidase and positively regulating reactive oxygen species (ROS) scavengers. In Oryza sativa subsp. japonica (Rice), this protein is Calcium-dependent protein kinase 12.